Reading from the N-terminus, the 209-residue chain is Inorganic pyrophosphatase (209 aa).

K38, R52, and Y64 together coordinate substrate. Residues D92, D97, and D130 each coordinate Mg(2+). Residue Y167 coordinates substrate.

Belongs to the PPase family. Homohexamer. It depends on Mg(2+) as a cofactor.

The protein resides in the cytoplasm. It carries out the reaction diphosphate + H2O = 2 phosphate + H(+). Its function is as follows. Catalyzes the hydrolysis of inorganic pyrophosphate (PPi) forming two phosphate ions. This Chlamydia muridarum (strain MoPn / Nigg) protein is Inorganic pyrophosphatase.